The following is a 117-amino-acid chain: Minor capsid protein VP2 (117 aa).

Belongs to the lagovirus VP2 protein family. In terms of assembly, homooligomer. The portal-like structure consists in 12 copies of VP2. Interacts with capsid protein VP1.

It localises to the virion. It is found in the host cytoplasm. Its function is as follows. Minor structural protein that forms a portal-like structure at a unique three-fold axis of symmetry, following binding to the host receptor. The channel formed by VP2 may allow the delivery of the viral genome through the host endosomal membrane. This is Minor capsid protein VP2 from Oryctolagus cuniculus (Rabbit).